The following is a 623-amino-acid chain: Glutathione import ATP-binding protein GsiA (623 aa).

2 consecutive ABC transporter domains span residues 15-269 (VENL…RALL) and 314-564 (LRVR…RKLL). ATP is bound by residues 49–56 (GESGSGKS) and 357–364 (GESGSGKS).

Belongs to the ABC transporter superfamily. Glutathione importer (TC 3.A.1.5.11) family. In terms of assembly, the complex is composed of two ATP-binding proteins (GsiA), two transmembrane proteins (GsiC and GsiD) and a solute-binding protein (GsiB).

It localises to the cell inner membrane. The catalysed reaction is glutathione(out) + ATP + H2O = glutathione(in) + ADP + phosphate + H(+). Functionally, part of the ABC transporter complex GsiABCD involved in glutathione import. Responsible for energy coupling to the transport system. The sequence is that of Glutathione import ATP-binding protein GsiA from Shigella sonnei (strain Ss046).